A 447-amino-acid chain; its full sequence is Signal recognition particle 54 kDa protein (447 aa).

Residues 103–110 (GVQGSGKT), 185–189 (DTAGR), and 245–248 (TKMD) contribute to the GTP site.

This sequence belongs to the GTP-binding SRP family. SRP54 subfamily. Part of the signal recognition particle protein translocation system, which is composed of SRP and FtsY. Archaeal SRP consists of a 7S RNA molecule of 300 nucleotides and two protein subunits: SRP54 and SRP19.

Its subcellular location is the cytoplasm. The catalysed reaction is GTP + H2O = GDP + phosphate + H(+). In terms of biological role, involved in targeting and insertion of nascent membrane proteins into the cytoplasmic membrane. Binds to the hydrophobic signal sequence of the ribosome-nascent chain (RNC) as it emerges from the ribosomes. The SRP-RNC complex is then targeted to the cytoplasmic membrane where it interacts with the SRP receptor FtsY. The polypeptide is Signal recognition particle 54 kDa protein (Saccharolobus islandicus (strain L.S.2.15 / Lassen #1) (Sulfolobus islandicus)).